Consider the following 78-residue polypeptide: D-alanyl carrier protein (78 aa).

Positions 1 to 78 constitute a Carrier domain; that stretch reads MEFKNQVYGI…HIAEQLAEMK (78 aa). The residue at position 36 (Ser-36) is an O-(pantetheine 4'-phosphoryl)serine.

The protein belongs to the DltC family. 4'-phosphopantetheine is transferred from CoA to a specific serine of apo-DCP.

Its subcellular location is the cytoplasm. Its pathway is cell wall biogenesis; lipoteichoic acid biosynthesis. Carrier protein involved in the D-alanylation of lipoteichoic acid (LTA). The loading of thioester-linked D-alanine onto DltC is catalyzed by D-alanine--D-alanyl carrier protein ligase DltA. The DltC-carried D-alanyl group is further transferred to cell membrane phosphatidylglycerol (PG) by forming an ester bond, probably catalyzed by DltD. D-alanylation of LTA plays an important role in modulating the properties of the cell wall in Gram-positive bacteria, influencing the net charge of the cell wall. This chain is D-alanyl carrier protein, found in Bacillus pumilus (strain SAFR-032).